Here is a 507-residue protein sequence, read N- to C-terminus: Arabinose import ATP-binding protein AraG (507 aa).

ABC transporter domains lie at 14-249 and 249-505; these read LRFN…MVGR and RDIQ…LPRT. Residue 46–53 coordinates ATP; sequence GENGAGKS.

Belongs to the ABC transporter superfamily. Arabinose importer (TC 3.A.1.2.2) family. The complex is composed of two ATP-binding proteins (AraG), two transmembrane proteins (AraH) and a solute-binding protein (AraF).

Its subcellular location is the cell inner membrane. The catalysed reaction is L-arabinose(out) + ATP + H2O = L-arabinose(in) + ADP + phosphate + H(+). In terms of biological role, part of the ABC transporter complex AraFGH involved in arabinose import. Responsible for energy coupling to the transport system. This Pseudomonas savastanoi pv. phaseolicola (strain 1448A / Race 6) (Pseudomonas syringae pv. phaseolicola (strain 1448A / Race 6)) protein is Arabinose import ATP-binding protein AraG.